The sequence spans 175 residues: MIKLTAQQIFDKLLDEEKILSANGQIRFFLGDVDIIVKQKDVVGNIIQEWLGGWLRKREIEFDVSTNTQMPPDFFLNKKDRSRELLEVKAFNRNACPGFDIADFKMYSDESFISPISGCRLFNIGYDMDDNGNVTIKDLWLKKVWQITRSMDGWAINFKSKKAWCIKSARVFGTA.

The catalysed reaction is Endonucleolytic cleavage of DNA to give specific double-stranded fragments with terminal 5'-phosphates.. In terms of biological role, a P subtype restriction enzyme that recognizes the double-stranded sequence 5'-GGNNCC-3'; the cleavage site is unknown. This is Type II restriction enzyme NgoBV (ngoBVR) from Neisseria gonorrhoeae.